The sequence spans 131 residues: MSGGKGKAGSSEKASTSRSAKAGLTFPVGRVHRLLRKGNYAQRIGSGAPVYLTSVLEYLAAEILELAGNAARDNKKSRIIPRHLQLAIRNDEELNKLLGDVTIAQGGVLPNIHQSLLPAKKAKAGAASQEL.

Positions 1–22 (MSGGKGKAGSSEKASTSRSAKA) are disordered. Ser-2 carries the N-acetylserine modification. Residues Lys-5 and Lys-7 each carry the N6-acetyllysine modification. Gln-105 carries the N5-methylglutamine modification. The residue at position 128 (Ser-128) is a Phosphoserine. The short motif at 128-129 (SQ) is the [ST]-Q motif element.

The protein belongs to the histone H2A family. In terms of assembly, the nucleosome is a histone octamer containing two molecules each of H2A, H2B, H3 and H4 assembled in one H3-H4 heterotetramer and two H2A-H2B heterodimers. The octamer wraps approximately 147 bp of DNA. In terms of processing, phosphorylated to form H2AS128ph (gamma-H2A) in response to DNA double-strand breaks (DSBs) generated by exogenous genotoxic agents and by stalled replication forks. Phosphorylation is dependent on the DNA damage checkpoint kinases MEC1/ATR and TEL1/ATM, spreads on either side of a detected DSB site and may mark the surrounding chromatin for recruitment of proteins required for DNA damage signaling and repair. Gamma-H2A is removed from the DNA prior to the strand invasion-primer extension step of the repair process and subsequently dephosphorylated. Dephosphorylation is necessary for efficient recovery from the DNA damage checkpoint. Post-translationally, acetylated by ESA1 to form H2AK4ac and H2AK7ac.

It is found in the nucleus. The protein localises to the chromosome. Functionally, core component of nucleosome which plays a central role in DNA double strand break (DSB) repair. Nucleosomes wrap and compact DNA into chromatin, limiting DNA accessibility to the cellular machineries which require DNA as a template. Histones thereby play a central role in transcription regulation, DNA repair, DNA replication and chromosomal stability. DNA accessibility is regulated via a complex set of post-translational modifications of histones, also called histone code, and nucleosome remodeling. The chain is Histone H2A.2 (HTA2) from Candida albicans (strain SC5314 / ATCC MYA-2876) (Yeast).